Here is a 160-residue protein sequence, read N- to C-terminus: Protein cornichon homolog 2 (160 aa).

Topologically, residues 1–10 (MAFTFAAFCY) are cytoplasmic. The helical transmembrane segment at 11–31 (MLTLVLCASLIFFVIWHIIAF) threads the bilayer. The Lumenal portion of the chain corresponds to 32 to 72 (DELRTDFKNPIDQGNPARARERLKNIERICCLLRKLVVPEY). A helical membrane pass occupies residues 73 to 93 (SIHGLFCLMFLCAAEWVTLGL). Residues 94–138 (NIPLLFYHLWRYFHRPADGSEVMYDAVSIMNADILNYCQKESWCK) lie on the Cytoplasmic side of the membrane. Residues 139–159 (LAFYLLSFFYYLYSMVYTLVS) form a helical membrane-spanning segment. Phe160 is a topological domain (lumenal).

Belongs to the cornichon family. Acts as an auxiliary subunit for AMPA-selective glutamate receptors (AMPARs). Found in a complex with GRIA1, GRIA2, GRIA3, GRIA4, CNIH3, CACNG2, CACNG3, CACNG4, CACNG5, CACNG7 and CACNG8. Interacts with CACGN8. Interacts with GRIA1. Found in a complex with GRIA1, GRIA2, GRIA3, GRIA4, DLG4 and CACNG8. Expression is up-regulated in dorsolateral prefrontal cortex of patients with schizophrenia (postmortem brain study).

The protein localises to the endoplasmic reticulum membrane. It localises to the postsynaptic cell membrane. Its subcellular location is the cell projection. The protein resides in the dendrite. It is found in the dendritic spine. The protein localises to the postsynaptic density. Functionally, regulates the trafficking and gating properties of AMPA-selective glutamate receptors (AMPARs). Promotes their targeting to the cell membrane and synapses and modulates their gating properties by regulating their rates of activation, deactivation and desensitization. Blocks CACNG8-mediated resensitization of AMPA receptors. The sequence is that of Protein cornichon homolog 2 from Homo sapiens (Human).